We begin with the raw amino-acid sequence, 329 residues long: uncharacterized protein (329 aa).

The disordered stretch occupies residues 284-303 (SGGGHSEAGGLNAPYDKSKS).

This is an uncharacterized protein from Methanocaldococcus jannaschii (strain ATCC 43067 / DSM 2661 / JAL-1 / JCM 10045 / NBRC 100440) (Methanococcus jannaschii).